A 187-amino-acid chain; its full sequence is 1,6-anhydro-N-acetylmuramyl-L-alanine amidase AmpD (187 aa).

The 139-residue stretch at 29–167 folds into the N-acetylmuramoyl-L-alanine amidase domain; that stretch reads SLLVVHNISL…TPDRKTDPGP (139 aa). His-34 contributes to the Zn(2+) binding site. The active-site Proton acceptor is the Glu-116. Residues His-154 and Asp-164 each coordinate Zn(2+).

This sequence belongs to the N-acetylmuramoyl-L-alanine amidase 2 family. Zn(2+) serves as cofactor.

It is found in the cytoplasm. It carries out the reaction Hydrolyzes the link between N-acetylmuramoyl residues and L-amino acid residues in certain cell-wall glycopeptides.. Functionally, involved in cell wall peptidoglycan recycling. Specifically cleaves the amide bond between the lactyl group of N-acetylmuramic acid and the alpha-amino group of the L-alanine in degradation products containing an anhydro N-acetylmuramyl moiety. The polypeptide is 1,6-anhydro-N-acetylmuramyl-L-alanine amidase AmpD (ampD) (Salmonella typhimurium (strain LT2 / SGSC1412 / ATCC 700720)).